The sequence spans 247 residues: MGHKVNPIGMRLQVNRTWDSRWYADTKDYGDLLLEDIKIRDYIKKGWWEHVAKRDKRPAGDAGISKIIIERPHKKCRVTIHSARPGVIIGKKGADIEGLRKKLAEITDSELHLNIVEIRKPELDARLVAESIAQQLERRVSFRRAMKRAVQNAMRMGSLGIRVNVAGRLGGAEIARTEWYREGRVPLHTLRADIDYAHAEAETAYGIIGIKTWIFKGEIMEHDPSAHDRRQQELQESGGASRPRRDR.

Residues 51 to 119 (VAKRDKRPAG…ELHLNIVEIR (69 aa)) form the KH type-2 domain. Residues 224-233 (PSAHDRRQQE) are compositionally biased toward basic and acidic residues. The segment at 224-247 (PSAHDRRQQELQESGGASRPRRDR) is disordered.

Belongs to the universal ribosomal protein uS3 family. As to quaternary structure, part of the 30S ribosomal subunit. Forms a tight complex with proteins S10 and S14.

Functionally, binds the lower part of the 30S subunit head. Binds mRNA in the 70S ribosome, positioning it for translation. This Jannaschia sp. (strain CCS1) protein is Small ribosomal subunit protein uS3.